A 99-amino-acid chain; its full sequence is Fetal and adult testis-expressed transcript protein homolog (99 aa).

A helical membrane pass occupies residues 79 to 98 (AALFTLLVSVCIANLWLWVH).

In terms of assembly, interacts with BIK and RNF183. Interacts with IMMT/MIC60and EMD.

Its subcellular location is the mitochondrion. The protein localises to the mitochondrion outer membrane. It is found in the endoplasmic reticulum membrane. Functionally, involved in the regulation of endoplasmic reticulum (ER)-mitochondria coupling. Negatively regulates the ER-mitochondria distance and Ca(2+) transfer from ER to mitochondria possibly implicating it in the regulation of apoptosis. May collaborate with RNF183 to restrain BIK protein levels thus regulating apoptotic signaling. This chain is Fetal and adult testis-expressed transcript protein homolog (Fate1), found in Mus musculus (Mouse).